Here is a 297-residue protein sequence, read N- to C-terminus: Protoheme IX farnesyltransferase (297 aa).

The next 9 membrane-spanning stretches (helical) occupy residues 16 to 36, 45 to 65, 93 to 113, 114 to 134, 141 to 161, 172 to 192, 223 to 243, 244 to 264, and 277 to 297; these read VVAL…PGVP, VLGF…NQLL, VFAS…VNLI, TAVL…VYLK, IVIG…AVTG, SLLV…LAIF, VVLA…AFYL, GGAI…LDPP, and IVYL…LPWL.

Belongs to the UbiA prenyltransferase family. Protoheme IX farnesyltransferase subfamily.

Its subcellular location is the cell inner membrane. It catalyses the reaction heme b + (2E,6E)-farnesyl diphosphate + H2O = Fe(II)-heme o + diphosphate. Its pathway is porphyrin-containing compound metabolism; heme O biosynthesis; heme O from protoheme: step 1/1. Converts heme B (protoheme IX) to heme O by substitution of the vinyl group on carbon 2 of heme B porphyrin ring with a hydroxyethyl farnesyl side group. The chain is Protoheme IX farnesyltransferase from Stenotrophomonas maltophilia (strain R551-3).